We begin with the raw amino-acid sequence, 44 residues long: Thymosin beta-4 (44 aa).

The tract at residues 1-44 (MSDKPDMGEIQKFNKSKLKKTETQEKNPLPSKETIEQEKQAGES) is disordered. An N-acetylserine modification is found at Ser-2. Phosphoserine is present on Ser-2. Lys-4 is subject to N6-acetyllysine. The residue at position 12 (Lys-12) is an N6-acetyllysine; alternate. Lys-12 participates in a covalent cross-link: Glycyl lysine isopeptide (Lys-Gly) (interchain with G-Cter in SUMO2); alternate. Phosphothreonine is present on Thr-23. Lys-26 carries the N6-acetyllysine modification. Residue Ser-31 is modified to Phosphoserine. The residue at position 32 (Lys-32) is an N6-acetyllysine. A compositionally biased stretch (basic and acidic residues) spans 33–44 (ETIEQEKQAGES). Thr-34 carries the post-translational modification Phosphothreonine. Lys-39 carries the N6-acetyllysine modification.

Belongs to the thymosin beta family. In terms of assembly, identified in a complex composed of ACTA1, COBL, GSN AND TMSB4X. Interacts with SERPINB1. In terms of processing, acSDKP is inactivated by ACE, which removes the dipeptide Lys-Pro from its C-terminus.

It localises to the cytoplasm. The protein localises to the cytoskeleton. Its function is as follows. Plays an important role in the organization of the cytoskeleton. Binds to and sequesters actin monomers (G actin) and therefore inhibits actin polymerization. Potent inhibitor of bone marrow derived stem cell differentiation. Acts by inhibits the entry of hematopoietic pluripotent stem cells into the S-phase. This is Thymosin beta-4 (TMSB4) from Notamacropus eugenii (Tammar wallaby).